Consider the following 704-residue polypeptide: Elongation factor G (704 aa).

The 283-residue stretch at 8–290 (EKYRNIGICA…GVVRYLPAPN (283 aa)) folds into the tr-type G domain. Residues 17–24 (AHVDAGKT), 88–92 (DTPGH), and 142–145 (NKMD) contribute to the GTP site.

This sequence belongs to the TRAFAC class translation factor GTPase superfamily. Classic translation factor GTPase family. EF-G/EF-2 subfamily.

It is found in the cytoplasm. Functionally, catalyzes the GTP-dependent ribosomal translocation step during translation elongation. During this step, the ribosome changes from the pre-translocational (PRE) to the post-translocational (POST) state as the newly formed A-site-bound peptidyl-tRNA and P-site-bound deacylated tRNA move to the P and E sites, respectively. Catalyzes the coordinated movement of the two tRNA molecules, the mRNA and conformational changes in the ribosome. In Francisella tularensis subsp. holarctica (strain LVS), this protein is Elongation factor G.